The sequence spans 778 residues: Gelsolin (778 aa).

A signal peptide spans 1–23 (MGKQGFGYIFLTIFCTMALKLNC). The segment at 49 to 172 (MVEHAEFSKA…YKAGGVASGF (124 aa)) is actin-severing. The Gelsolin-like 1 repeat unit spans residues 72 to 154 (FDLVPVPKNL…VQGHESSTFL (83 aa)). Residues Gly88, Asp89, Glu120, Asp132, Gly137, and Ala139 each contribute to the Ca(2+) site. Residues 119-122 (DERG) form an actin-actin interfilament contact point region. 158 to 165 (KSGIKYKA) provides a ligand contact to a 1,2-diacyl-sn-glycero-3-phospho-(1D-myo-inositol-4,5-bisphosphate). Val168 contributes to the Ca(2+) binding site. 184–192 (RLLQVKGRR) lines the a 1,2-diacyl-sn-glycero-3-phospho-(1D-myo-inositol-4,5-bisphosphate) pocket. Residues 193–266 (TVRATEVPVS…SEEGAEREEM (74 aa)) form a Gelsolin-like 2 repeat. Ca(2+) contacts are provided by Gly209 and Asp210. Cys211 and Cys224 are joined by a disulfide. Glu232, Asp282, Glu325, Asp326, Glu350, Gly467, Asp468, Glu498, Asp510, Gly515, Pro517, Thr547, Asn587, Asp588, Glu610, Asp692, Asp693, and Glu715 together coordinate Ca(2+). Gelsolin-like repeat units follow at residues 313–385 (DENP…TPLF) and 451–532 (SEKV…PHLM). The segment at 430–778 (AAQHGMEDDG…LQRAMADVDV (349 aa)) is actin-binding, Ca-sensitive. Gelsolin-like repeat units lie at residues 574 to 638 (AVEL…DNFW) and 677 to 752 (IEEV…PPTF).

It belongs to the villin/gelsolin family. In terms of assembly, binds to actin and to fibronectin. As to expression, highly expressed in homogene cells of the basilar papilla. Also detected in subcutaneous layer of the skin.

The protein localises to the secreted. The protein resides in the cytoplasm. It is found in the cytoskeleton. Functionally, calcium-regulated, actin-modulating protein that binds to the plus (or barbed) ends of actin monomers or filaments, preventing monomer exchange (end-blocking or capping). It can promote the assembly of monomers into filaments (nucleation) as well as sever filaments already formed. Plays a role in ciliogenesis. This Gallus gallus (Chicken) protein is Gelsolin (GSN).